The sequence spans 157 residues: Snaclec A16 (157 aa).

Positions methionine 1–alanine 23 are cleaved as a signal peptide. 3 cysteine pairs are disulfide-bonded: cysteine 27/cysteine 38, cysteine 55/cysteine 149, and cysteine 124/cysteine 141. The C-type lectin domain maps to tyrosine 34–methionine 150.

The protein belongs to the snaclec family. As to quaternary structure, heterodimer; disulfide-linked. Expressed by the venom gland.

Its subcellular location is the secreted. Functionally, interferes with one step of hemostasis (modulation of platelet aggregation, or coagulation cascade, for example). In Macrovipera lebetinus (Levantine viper), this protein is Snaclec A16.